The primary structure comprises 121 residues: Large ribosomal subunit protein uL18 (121 aa).

Residues 1 to 19 (MASKKVQKIRDKRKARVRA) are compositionally biased toward basic residues. The disordered stretch occupies residues 1–23 (MASKKVQKIRDKRKARVRAKISG).

Belongs to the universal ribosomal protein uL18 family. As to quaternary structure, part of the 50S ribosomal subunit; part of the 5S rRNA/L5/L18/L25 subcomplex. Contacts the 5S and 23S rRNAs.

In terms of biological role, this is one of the proteins that bind and probably mediate the attachment of the 5S RNA into the large ribosomal subunit, where it forms part of the central protuberance. The polypeptide is Large ribosomal subunit protein uL18 (Syntrophus aciditrophicus (strain SB)).